The following is a 444-amino-acid chain: MAERKYFGTDGVRGKVGQFPITPDFALKLGWAAGKILATQGTKQVLIGKDTRISGYMLESALEAGLAAAGLSAAFVGPMPTPAIAYLTRTFRAEAGIVISASHNPYYDNGIKFFSSVGEKLPDEVEEAIEALLDQPMDCVESAQLGKAMRINDAAGRYIEFCKGTFPANASLKGYKIVVDCANGATYHIAPNVMRELGAEVIEIGTKPDGLNINEKCGATDIKALQKVVVESGADVGLAYDGDGDRIMMVDHLGNKVDGDQILFIIAREALRSGKLHGGVVGTLMSNMGLEVALKHLAIPFTRANVGDRYVLEQLKEKGWKLGGENSGHIIVLDKNTTGDGIIASLEVLAAMEAHKMSLNDLARAVPLFPQVLINVRFEGGKNPLESDAVKAVAADVEKRLAGRGRILLRKSGTEPLIRVMVECEDGALAQSCAEEIVEAVKSN.

The active-site Phosphoserine intermediate is the Ser102. Mg(2+) is bound by residues Ser102, Asp241, Asp243, and Asp245. Ser102 bears the Phosphoserine mark.

Belongs to the phosphohexose mutase family. It depends on Mg(2+) as a cofactor. Post-translationally, activated by phosphorylation.

It catalyses the reaction alpha-D-glucosamine 1-phosphate = D-glucosamine 6-phosphate. Catalyzes the conversion of glucosamine-6-phosphate to glucosamine-1-phosphate. The protein is Phosphoglucosamine mutase of Actinobacillus pleuropneumoniae serotype 7 (strain AP76).